A 583-amino-acid polypeptide reads, in one-letter code: Phosphoglucomutase, cytoplasmic 2 (583 aa).

Residues R25 and S124 each coordinate alpha-D-glucose 1,6-bisphosphate. Residue S124 is the Phosphoserine intermediate of the active site. Residues S124, D300, D302, and D304 each contribute to the Mg(2+) site. S124 bears the Phosphoserine mark. Positions 304, 305, 368, 387, 389, and 400 each coordinate alpha-D-glucose 1,6-bisphosphate.

Belongs to the phosphohexose mutase family. As to quaternary structure, monomer. Requires Mg(2+) as cofactor.

It localises to the cytoplasm. It catalyses the reaction alpha-D-glucose 1-phosphate = alpha-D-glucose 6-phosphate. The enzyme catalyses O-phospho-L-seryl-[protein] + alpha-D-glucose 1-phosphate = alpha-D-glucose 1,6-bisphosphate + L-seryl-[protein]. The catalysed reaction is alpha-D-glucose 1,6-bisphosphate + L-seryl-[protein] = O-phospho-L-seryl-[protein] + alpha-D-glucose 6-phosphate. Catalyzes the reversible isomerization of alpha-D-glucose 1-phosphate to alpha-D-glucose 6-phosphate. The mechanism proceeds via the intermediate compound alpha-D-glucose 1,6-bisphosphate. This enzyme participates in both the breakdown and synthesis of glucose. The chain is Phosphoglucomutase, cytoplasmic 2 from Zea mays (Maize).